Consider the following 96-residue polypeptide: DNA-directed RNA polymerase subunit Rpo11 (96 aa).

The protein belongs to the archaeal Rpo11/eukaryotic RPB11/RPC19 RNA polymerase subunit family. In terms of assembly, part of the RNA polymerase complex.

Its subcellular location is the cytoplasm. It catalyses the reaction RNA(n) + a ribonucleoside 5'-triphosphate = RNA(n+1) + diphosphate. Functionally, DNA-dependent RNA polymerase (RNAP) catalyzes the transcription of DNA into RNA using the four ribonucleoside triphosphates as substrates. The chain is DNA-directed RNA polymerase subunit Rpo11 from Nanoarchaeum equitans (strain Kin4-M).